A 229-amino-acid polypeptide reads, in one-letter code: Large ribosomal subunit protein uL1 (229 aa).

It belongs to the universal ribosomal protein uL1 family. As to quaternary structure, part of the 50S ribosomal subunit.

In terms of biological role, binds directly to 23S rRNA. The L1 stalk is quite mobile in the ribosome, and is involved in E site tRNA release. Protein L1 is also a translational repressor protein, it controls the translation of the L11 operon by binding to its mRNA. The protein is Large ribosomal subunit protein uL1 of Streptococcus pneumoniae serotype 2 (strain D39 / NCTC 7466).